A 519-amino-acid chain; its full sequence is Glutamate--cysteine ligase (519 aa).

It belongs to the glutamate--cysteine ligase type 1 family. Type 1 subfamily.

The catalysed reaction is L-cysteine + L-glutamate + ATP = gamma-L-glutamyl-L-cysteine + ADP + phosphate + H(+). It participates in sulfur metabolism; glutathione biosynthesis; glutathione from L-cysteine and L-glutamate: step 1/2. In Edwardsiella ictaluri (strain 93-146), this protein is Glutamate--cysteine ligase.